Here is a 428-residue protein sequence, read N- to C-terminus: Dihydroorotase (428 aa).

2 residues coordinate Zn(2+): His-59 and His-61. Residues 61–63 and Asn-93 contribute to the substrate site; that span reads HLR. Asp-151, His-178, and His-231 together coordinate Zn(2+). Asn-277 contributes to the substrate binding site. Residue Asp-304 participates in Zn(2+) binding. Residue Asp-304 is part of the active site. Substrate is bound by residues His-308 and 322 to 323; that span reads FG.

It belongs to the metallo-dependent hydrolases superfamily. DHOase family. Class I DHOase subfamily. Zn(2+) serves as cofactor.

It carries out the reaction (S)-dihydroorotate + H2O = N-carbamoyl-L-aspartate + H(+). It participates in pyrimidine metabolism; UMP biosynthesis via de novo pathway; (S)-dihydroorotate from bicarbonate: step 3/3. Functionally, catalyzes the reversible cyclization of carbamoyl aspartate to dihydroorotate. The chain is Dihydroorotase from Bacillus anthracis (strain A0248).